Here is a 62-residue protein sequence, read N- to C-terminus: Large ribosomal subunit protein uL30 (62 aa).

It belongs to the universal ribosomal protein uL30 family. In terms of assembly, part of the 50S ribosomal subunit.

The protein is Large ribosomal subunit protein uL30 of Shewanella frigidimarina (strain NCIMB 400).